Consider the following 374-residue polypeptide: Putative 2,3-diketo-5-methylthiopentyl-1-phosphate enolase (374 aa).

Substrate-binding positions include lysine 138, 164-167, histidine 255, glycine 327, and 349-350; these read QDDE and GG. Aspartate 166 contributes to the Mg(2+) binding site.

It belongs to the RuBisCO large chain family. Type IV subfamily. As to quaternary structure, homodimer. Mg(2+) is required as a cofactor.

It catalyses the reaction 5-methylsulfanyl-2,3-dioxopentyl phosphate = 2-hydroxy-5-methylsulfanyl-3-oxopent-1-enyl phosphate. The protein operates within amino-acid biosynthesis; L-methionine biosynthesis via salvage pathway; L-methionine from S-methyl-5-thio-alpha-D-ribose 1-phosphate: step 3/6. Catalyzes the enolization of 2,3-diketo-5-methylthiopentyl-1-phosphate (DK-MTP-1-P) into 2-hydroxy-3-keto-5-methylthiopentenyl-1-phosphate (HK-MTPenyl-1-P). The chain is Putative 2,3-diketo-5-methylthiopentyl-1-phosphate enolase (mtnW) from Shouchella clausii (strain KSM-K16) (Alkalihalobacillus clausii).